Consider the following 630-residue polypeptide: A-type voltage-gated potassium channel KCND2 (630 aa).

The Cytoplasmic segment spans residues 1 to 184 (MAAGVAAWLP…FENPHTSTMA (184 aa)). The segment at 2–20 (AAGVAAWLPFARAAAIGWM) is interaction with KCNIP1, KCNIP2, and other family members. Thr38 is subject to Phosphothreonine. Positions 71-90 (ERDFFYHPETQQYFFDRDPD) are interaction with KCNIP1. Positions 105, 111, 132, and 133 each coordinate Zn(2+). The helical transmembrane segment at 185-206 (LVFYYVTGFFIAVSVIANVVET) threads the bilayer. Residues 207–226 (VPCGSSPGHIKELPCGERYA) are Extracellular-facing. The helical transmembrane segment at 227–249 (VAFFCLDTACVMIFTVEYLLRLA) threads the bilayer. At 250–256 (AAPSRYR) the chain is on the cytoplasmic side. The helical transmembrane segment at 257–281 (FVRSVMSIIDVVAILPYYIGLVMTD) threads the bilayer. The Extracellular segment spans residues 282–287 (NEDVSG). A helical; Voltage-sensor membrane pass occupies residues 288–307 (AFVTLRVFRVFRIFKFSRHS). Residues 308–321 (QGLRILGYTLKSCA) are Cytoplasmic-facing. An S4-S5 linker region spans residues 308-321 (QGLRILGYTLKSCA). A helical membrane pass occupies residues 322–345 (SELGFLLFSLTMAIIIFATVMFYA). At 346-357 (EKGSSASKFTSI) the chain is on the extracellular side. An intramembrane region (helical) is located at residues 358–369 (PAAFWYTIVTMT). 4 residues coordinate K(+): Thr370, Leu371, Gly372, and Tyr373. Residues 370–375 (TLGYGD) carry the Selectivity filter motif. Residues 370-377 (TLGYGDMV) lie within the membrane without spanning it. Topologically, residues 378 to 380 (PKT) are extracellular. The helical transmembrane segment at 381–403 (IAGKIFGSICSLSGVLVIALPVP) threads the bilayer. The Cytoplasmic portion of the chain corresponds to 404–630 (VIVSNFSRIY…GGNIVRVSAL (227 aa)). Residue Ser438 is modified to Phosphoserine. The interval 474–489 (FETQHHHLLHCLEKTT) is required for dendritic targeting. The important for normal channel activation and inactivation, for interaction with KCNIP2, and probably other family members as well stretch occupies residues 474–630 (FETQHHHLLH…GGNIVRVSAL (157 aa)). Residues Ser548, Ser552, Ser572, and Ser575 each carry the phosphoserine modification. The disordered stretch occupies residues 600–623 (IPTPPVTTPEGDDRPESPEYSGGN). Phosphothreonine occurs at positions 602 and 607. Position 616 is a phosphoserine (Ser616). The PDZ-binding signature appears at 627 to 630 (VSAL).

It belongs to the potassium channel family. D (Shal) (TC 1.A.1.2) subfamily. Kv4.2/KCND2 sub-subfamily. As to quaternary structure, homotetramer or heterotetramer with KCND1 or KCND3. Associates with the regulatory subunits KCNIP1, KCNIP2, KCNIP3 and KCNIP4. Interacts with DPP6, DPP10, DLG4 and DLG1. In vivo, probably exists as heteromeric complex containing variable proportions of KCND1, KCND2, KCND3, KCNIP1, KCNIP2, KCNIP3, KCNIP4, DPP6 and DPP10. The tetrameric channel can associate with up to four regulatory subunits, such as KCNIP2 or KCNIP4. Interaction with KCNIP3 promotes tetramerization and formation of a functional potassium channel. Interaction with four KCNIP4 chains does not reduce interaction with DPP10. Probably part of a complex consisting of KCNIP1, KCNIP2 isoform 3 and KCND2. Interacts with FLNA and FLNC. Interacts with NCS1/FREQ. Identified in a complex with cAMP-dependent protein kinase (PKA), CAV3, AKAP6 and KCND3 in cardiac myocytes. Interacts (via S1 and S2 helices) with DPP6; this interaction stabilizes the conformation of the S1-S2 helices and facilitates S4 conformational change, including S4 sliding up and down, thereby accelerating activation, inactivation, and recovery. Post-translationally, phosphorylation at Ser-438 in response to MAPK activation is increased in stimulated dendrites. Interaction with KCNIP2 and DPP6 propomtes phosphorylation by PKA at Ser-552. Phosphorylation at Ser-552 has no effect on interaction with KCNIP3, but is required for the regulation of channel activity by KCNIP3. Phosphorylation at Ser-552 leads to KCND2 internalization. Phosphorylated by MAPK in response to signaling via the metabotropic glutamate receptor GRM5. Phosphorylation at Ser-616 is required for the down-regulation of neuronal A-type currents in response to signaling via GRM5. In terms of tissue distribution, detected in brain frontal cortex.

It localises to the cell membrane. The protein localises to the cell projection. It is found in the dendrite. The protein resides in the synapse. Its subcellular location is the perikaryon. It localises to the postsynaptic cell membrane. The protein localises to the dendritic spine. It is found in the sarcolemma. The protein resides in the cell junction. Its subcellular location is the membrane. It localises to the caveola. It catalyses the reaction K(+)(in) = K(+)(out). In terms of biological role, voltage-gated potassium channel that mediates transmembrane potassium transport in excitable membranes, primarily in the brain. Mediates the major part of the dendritic A-type current I(SA) in brain neurons. This current is activated at membrane potentials that are below the threshold for action potentials. It regulates neuronal excitability, prolongs the latency before the first spike in a series of action potentials, regulates the frequency of repetitive action potential firing, shortens the duration of action potentials and regulates the back-propagation of action potentials from the neuronal cell body to the dendrites. Contributes to the regulation of the circadian rhythm of action potential firing in suprachiasmatic nucleus neurons, which regulates the circadian rhythm of locomotor activity. Functions downstream of the metabotropic glutamate receptor GRM5 and plays a role in neuronal excitability and in nociception mediated by activation of GRM5. Mediates the transient outward current I(to) in rodent heart left ventricle apex cells, but not in human heart, where this current is mediated by another family member. Forms tetrameric potassium-selective channels through which potassium ions pass in accordance with their electrochemical gradient. The channel alternates between opened and closed conformations in response to the voltage difference across the membrane. Can form functional homotetrameric channels and heterotetrameric channels that contain variable proportions of KCND2 and KCND3; channel properties depend on the type of pore-forming alpha subunits that are part of the channel. In vivo, membranes probably contain a mixture of heteromeric potassium channel complexes. Interaction with specific isoforms of the regulatory subunits KCNIP1, KCNIP2, KCNIP3 or KCNIP4 strongly increases expression at the cell surface and thereby increases channel activity; it modulates the kinetics of channel activation and inactivation, shifts the threshold for channel activation to more negative voltage values, shifts the threshold for inactivation to less negative voltages and accelerates recovery after inactivation. Likewise, interaction with DPP6 or DPP10 promotes expression at the cell membrane and regulates both channel characteristics and activity. Upon depolarization, the channel goes from a resting closed state (C state) to an activated but non-conducting state (C* state), from there, the channel may either inactivate (I state) or open (O state). This chain is A-type voltage-gated potassium channel KCND2, found in Oryctolagus cuniculus (Rabbit).